We begin with the raw amino-acid sequence, 293 residues long: Protease HtpX homolog (293 aa).

2 helical membrane-spanning segments follow: residues 4-24 (IFLFVATNIAVIAVMSIVLSL) and 39-59 (PMLLVFSLVVGFTGAIISLLI). A Zn(2+)-binding site is contributed by His-144. Residue Glu-145 is part of the active site. Position 148 (His-148) interacts with Zn(2+). The next 2 helical transmembrane spans lie at 159-179 (LVQGVVNTFVVFLARVVGYFV) and 200-220 (ITVLVCQVVFGIAASVIVAWF). Residue Glu-225 coordinates Zn(2+).

It belongs to the peptidase M48B family. It depends on Zn(2+) as a cofactor.

It is found in the cell inner membrane. The protein is Protease HtpX homolog of Herminiimonas arsenicoxydans.